Here is a 358-residue protein sequence, read N- to C-terminus: UDP-N-acetylglucosamine--N-acetylmuramyl-(pentapeptide) pyrophosphoryl-undecaprenol N-acetylglucosamine transferase (358 aa).

UDP-N-acetyl-alpha-D-glucosamine contacts are provided by residues 11–13 (TGG), R163, S191, I245, and Q290.

The protein belongs to the glycosyltransferase 28 family. MurG subfamily.

It localises to the cell inner membrane. The enzyme catalyses di-trans,octa-cis-undecaprenyl diphospho-N-acetyl-alpha-D-muramoyl-L-alanyl-D-glutamyl-meso-2,6-diaminopimeloyl-D-alanyl-D-alanine + UDP-N-acetyl-alpha-D-glucosamine = di-trans,octa-cis-undecaprenyl diphospho-[N-acetyl-alpha-D-glucosaminyl-(1-&gt;4)]-N-acetyl-alpha-D-muramoyl-L-alanyl-D-glutamyl-meso-2,6-diaminopimeloyl-D-alanyl-D-alanine + UDP + H(+). It functions in the pathway cell wall biogenesis; peptidoglycan biosynthesis. Its function is as follows. Cell wall formation. Catalyzes the transfer of a GlcNAc subunit on undecaprenyl-pyrophosphoryl-MurNAc-pentapeptide (lipid intermediate I) to form undecaprenyl-pyrophosphoryl-MurNAc-(pentapeptide)GlcNAc (lipid intermediate II). The polypeptide is UDP-N-acetylglucosamine--N-acetylmuramyl-(pentapeptide) pyrophosphoryl-undecaprenol N-acetylglucosamine transferase (Herminiimonas arsenicoxydans).